Reading from the N-terminus, the 634-residue chain is ATP-dependent zinc metalloprotease FtsH (634 aa).

Residues 1 to 5 lie on the Cytoplasmic side of the membrane; it reads MNALK. A helical transmembrane segment spans residues 6-26; that stretch reads NFFIWAIIIGAAIVAFNLFEG. Over 27-100 the chain is Periplasmic; that stretch reads KREFTTKVSL…VANPEPPGGW (74 aa). A helical transmembrane segment spans residues 101-121; it reads LVNVFLSWLPILFFIGIWIFL. Residues 122-634 lie on the Cytoplasmic side of the membrane; that stretch reads LRQMSGGGNV…KSEEVKEEVV (513 aa). An ATP-binding site is contributed by 195 to 202; that stretch reads GEPGVGKT. Histidine 418 lines the Zn(2+) pocket. The active site involves glutamate 419. 2 residues coordinate Zn(2+): histidine 422 and aspartate 496. The segment at 615 to 634 is disordered; it reads DRKSEENKELKSEEVKEEVV.

In the central section; belongs to the AAA ATPase family. The protein in the C-terminal section; belongs to the peptidase M41 family. As to quaternary structure, the isolated protease domain (residues 405-634) forms a stable hexamer. It depends on Zn(2+) as a cofactor.

The protein resides in the cell inner membrane. Functionally, acts as a processive, ATP-dependent zinc metallopeptidase for both cytoplasmic and membrane proteins. Plays a role in the quality control of integral membrane proteins. In Aquifex aeolicus (strain VF5), this protein is ATP-dependent zinc metalloprotease FtsH.